Reading from the N-terminus, the 422-residue chain is Histidine--tRNA ligase (422 aa).

The protein belongs to the class-II aminoacyl-tRNA synthetase family. As to quaternary structure, homodimer.

The protein localises to the cytoplasm. The catalysed reaction is tRNA(His) + L-histidine + ATP = L-histidyl-tRNA(His) + AMP + diphosphate + H(+). This Alcanivorax borkumensis (strain ATCC 700651 / DSM 11573 / NCIMB 13689 / SK2) protein is Histidine--tRNA ligase.